The following is a 125-amino-acid chain: uncharacterized protein (125 aa).

A Cupin type-2 domain is found at 45-110 (IVPVGSKTLL…IGNVPLKILC (66 aa)).

This is an uncharacterized protein from Methanocaldococcus jannaschii (strain ATCC 43067 / DSM 2661 / JAL-1 / JCM 10045 / NBRC 100440) (Methanococcus jannaschii).